A 545-amino-acid chain; its full sequence is Chaperonin GroEL 1 (545 aa).

Residues 30–33 (TLGP), K51, 87–91 (DGTTT), G415, and D495 each bind ATP.

Belongs to the chaperonin (HSP60) family. As to quaternary structure, forms a cylinder of 14 subunits composed of two heptameric rings stacked back-to-back. Interacts with the co-chaperonin GroES.

Its subcellular location is the cytoplasm. It catalyses the reaction ATP + H2O + a folded polypeptide = ADP + phosphate + an unfolded polypeptide.. Functionally, together with its co-chaperonin GroES, plays an essential role in assisting protein folding. The GroEL-GroES system forms a nano-cage that allows encapsulation of the non-native substrate proteins and provides a physical environment optimized to promote and accelerate protein folding. In Rhizobium meliloti (strain 1021) (Ensifer meliloti), this protein is Chaperonin GroEL 1.